We begin with the raw amino-acid sequence, 231 residues long: Cytochrome c oxidase subunit 2 (231 aa).

The Mitochondrial intermembrane portion of the chain corresponds to 1–14; sequence MAHPAQLGLQNATS. A helical membrane pass occupies residues 15–45; the sequence is PIMEELIAFHDHALMIIFLISSLVLYVISLM. At 46–59 the chain is on the mitochondrial matrix side; the sequence is LTTKLTHTSTMNAQ. The chain crosses the membrane as a helical span at residues 60–87; it reads EIEMIWTILPAIILIMIALPSLRILYMT. At 88 to 231 the chain is on the mitochondrial intermembrane side; sequence DEFNKPYLTL…WASYLYIVSL (144 aa). Cu cation-binding residues include His-161, Cys-196, Glu-198, Cys-200, His-204, and Met-207. Glu-198 is a Mg(2+) binding site.

This sequence belongs to the cytochrome c oxidase subunit 2 family. In terms of assembly, component of the cytochrome c oxidase (complex IV, CIV), a multisubunit enzyme composed of 14 subunits. The complex is composed of a catalytic core of 3 subunits MT-CO1, MT-CO2 and MT-CO3, encoded in the mitochondrial DNA, and 11 supernumerary subunits COX4I, COX5A, COX5B, COX6A, COX6B, COX6C, COX7A, COX7B, COX7C, COX8 and NDUFA4, which are encoded in the nuclear genome. The complex exists as a monomer or a dimer and forms supercomplexes (SCs) in the inner mitochondrial membrane with NADH-ubiquinone oxidoreductase (complex I, CI) and ubiquinol-cytochrome c oxidoreductase (cytochrome b-c1 complex, complex III, CIII), resulting in different assemblies (supercomplex SCI(1)III(2)IV(1) and megacomplex MCI(2)III(2)IV(2)). Found in a complex with TMEM177, COA6, COX18, COX20, SCO1 and SCO2. Interacts with TMEM177 in a COX20-dependent manner. Interacts with COX20. Interacts with COX16. Requires Cu cation as cofactor.

The protein localises to the mitochondrion inner membrane. It catalyses the reaction 4 Fe(II)-[cytochrome c] + O2 + 8 H(+)(in) = 4 Fe(III)-[cytochrome c] + 2 H2O + 4 H(+)(out). In terms of biological role, component of the cytochrome c oxidase, the last enzyme in the mitochondrial electron transport chain which drives oxidative phosphorylation. The respiratory chain contains 3 multisubunit complexes succinate dehydrogenase (complex II, CII), ubiquinol-cytochrome c oxidoreductase (cytochrome b-c1 complex, complex III, CIII) and cytochrome c oxidase (complex IV, CIV), that cooperate to transfer electrons derived from NADH and succinate to molecular oxygen, creating an electrochemical gradient over the inner membrane that drives transmembrane transport and the ATP synthase. Cytochrome c oxidase is the component of the respiratory chain that catalyzes the reduction of oxygen to water. Electrons originating from reduced cytochrome c in the intermembrane space (IMS) are transferred via the dinuclear copper A center (CU(A)) of subunit 2 and heme A of subunit 1 to the active site in subunit 1, a binuclear center (BNC) formed by heme A3 and copper B (CU(B)). The BNC reduces molecular oxygen to 2 water molecules using 4 electrons from cytochrome c in the IMS and 4 protons from the mitochondrial matrix. This Alouatta palliata (Mantled howler monkey) protein is Cytochrome c oxidase subunit 2 (MT-CO2).